A 130-amino-acid chain; its full sequence is MMRQSLQAVLPEISGNKTSLLRKSVCSDLLTLFNSPHSALPSLLVSGMPEWQVHNPSDKHLQSWYCRQLRSALLFHEPRIAALQVNLKEAYCHTLAISLEIMLYHDDEPLTFDLVWDNGGWRSATLENVS.

It belongs to the GpW/Gp25 family. IraD subfamily. In terms of assembly, interacts with RssB.

Its subcellular location is the cytoplasm. In terms of biological role, inhibits RpoS proteolysis by regulating RssB activity, thereby increasing the stability of the sigma stress factor RpoS during oxidative stress. Its effect on RpoS stability is due to its interaction with RssB, which probably blocks the interaction of RssB with RpoS, and the consequent delivery of the RssB-RpoS complex to the ClpXP protein degradation pathway. In Shigella boydii serotype 4 (strain Sb227), this protein is Anti-adapter protein IraD.